Consider the following 446-residue polypeptide: Protein odr-4 homolog (446 aa).

2 helical membrane-spanning segments follow: residues 81 to 101 (MLPGGLLVLSVFIIATPELSK) and 424 to 444 (MGVVIAVAVAVFASIFSFNYF).

Belongs to the ODR-4 family.

Its subcellular location is the membrane. May play a role in the trafficking of a subset of G-protein coupled receptors. In Gallus gallus (Chicken), this protein is Protein odr-4 homolog (ODR4).